A 451-amino-acid polypeptide reads, in one-letter code: Midnolin-B (451 aa).

In terms of domain architecture, Ubiquitin-like spans 20-94 (MNLNIQSTTG…LTLLPSVEAG (75 aa)). Disordered stretches follow at residues 187 to 254 (ASCT…RSRK), 331 to 372 (RNAK…QTEN), and 388 to 427 (QKRL…EGSL). Low complexity-rich tracts occupy residues 190–205 (TPGS…TSST), 237–250 (STRG…SPSS), and 336–347 (TSPQSTGPQQTT). The segment covering 363–372 (SGDRLRQTEN) has biased composition (basic and acidic residues). The segment covering 388 to 397 (QKRLRRKARR) has biased composition (basic residues). Positions 413-426 (RTSSNSSTSSGEGS) are enriched in low complexity.

The protein localises to the nucleus. Its subcellular location is the cytoplasm. The protein resides in the cytosol. It is found in the nucleolus. In terms of biological role, facilitates ubiquitin-independent proteasomal degradation of polycomb protein CBX4. Plays a role in inhibiting the activity of glucokinase GCK and both glucose-induced and basal insulin secretion. This is Midnolin-B (midn-b) from Xenopus laevis (African clawed frog).